Consider the following 66-residue polypeptide: Toxin Boma6b (66 aa).

The LCN-type CS-alpha/beta domain occupies Arg2–His64. 4 disulfide bridges follow: Cys12–Cys63, Cys16–Cys36, Cys22–Cys46, and Cys26–Cys48.

Belongs to the long (4 C-C) scorpion toxin superfamily. Sodium channel inhibitor family. Alpha subfamily. As to expression, expressed by the venom gland.

Its subcellular location is the secreted. In terms of biological role, alpha toxins bind voltage-independently at site-3 of sodium channels (Nav) and inhibit the inactivation of the activated channels, thereby blocking neuronal transmission. The protein is Toxin Boma6b of Buthus occitanus mardochei (Moroccan scorpion).